Consider the following 391-residue polypeptide: ATP phosphoribosyltransferase regulatory subunit (391 aa).

This sequence belongs to the class-II aminoacyl-tRNA synthetase family. HisZ subfamily. Heteromultimer composed of HisG and HisZ subunits.

Its subcellular location is the cytoplasm. Its pathway is amino-acid biosynthesis; L-histidine biosynthesis; L-histidine from 5-phospho-alpha-D-ribose 1-diphosphate: step 1/9. Required for the first step of histidine biosynthesis. May allow the feedback regulation of ATP phosphoribosyltransferase activity by histidine. The polypeptide is ATP phosphoribosyltransferase regulatory subunit (Bacillus pumilus (strain SAFR-032)).